A 253-amino-acid polypeptide reads, in one-letter code: Transmembrane protein 69 (253 aa).

5 helical membrane-spanning segments follow: residues 104 to 124, 137 to 157, 165 to 185, 192 to 212, and 223 to 243; these read ALYLGLAGLIPFVSAPLLMNV, VAYGASILSFLGGVRWGFAIP, DWMNLTNSTVPALLAWLALLF, AAVLVIMGLGIALHYDLALLP, and AILTVVAVFSLVGSLINSSVY.

It localises to the membrane. The sequence is that of Transmembrane protein 69 (tmem69) from Xenopus tropicalis (Western clawed frog).